A 69-amino-acid polypeptide reads, in one-letter code: UPF0434 protein Rmet_0534 (69 aa).

This sequence belongs to the UPF0434 family.

This is UPF0434 protein Rmet_0534 from Cupriavidus metallidurans (strain ATCC 43123 / DSM 2839 / NBRC 102507 / CH34) (Ralstonia metallidurans).